The primary structure comprises 426 residues: Histidinol dehydrogenase (426 aa).

Tyr126, Gln188, and Asn210 together coordinate NAD(+). The substrate site is built by Ser233, Gln255, and His258. Zn(2+) contacts are provided by Gln255 and His258. Active-site proton acceptor residues include Glu323 and His324. Residues His324, Asp357, Glu411, and His416 each contribute to the substrate site. Asp357 contributes to the Zn(2+) binding site. His416 is a binding site for Zn(2+).

It belongs to the histidinol dehydrogenase family. The cofactor is Zn(2+).

It carries out the reaction L-histidinol + 2 NAD(+) + H2O = L-histidine + 2 NADH + 3 H(+). It participates in amino-acid biosynthesis; L-histidine biosynthesis; L-histidine from 5-phospho-alpha-D-ribose 1-diphosphate: step 9/9. In terms of biological role, catalyzes the sequential NAD-dependent oxidations of L-histidinol to L-histidinaldehyde and then to L-histidine. This is Histidinol dehydrogenase from Heliobacterium mobile (Heliobacillus mobilis).